Consider the following 213-residue polypeptide: MLDREGFRPNVGIVLLNQKNQVFWGKRIRTHSWQFPQGGIDRGETPEQAMIRELHEEVGLLREHIRIVARTRDWLRYEVPDRYIRRDARGFYKGQKQIWFLLQLVGHDWDLNLRATDHPEFDAWRWNDYWVPLDAVVEFKRGVYEIALTELARYLPRNELRNRFLRQGVRPHEQETTFDAVPGANFELPPGGSFEPNPQTSYGLDASGKPHET.

The 144-residue stretch at 6–149 folds into the Nudix hydrolase domain; that stretch reads GFRPNVGIVL…KRGVYEIALT (144 aa). The Nudix box signature appears at 38-59; it reads GGIDRGETPEQAMIRELHEEVG. A disordered region spans residues 185 to 213; it reads NFELPPGGSFEPNPQTSYGLDASGKPHET.

Belongs to the Nudix hydrolase family. RppH subfamily. A divalent metal cation is required as a cofactor.

Functionally, accelerates the degradation of transcripts by removing pyrophosphate from the 5'-end of triphosphorylated RNA, leading to a more labile monophosphorylated state that can stimulate subsequent ribonuclease cleavage. In Albidiferax ferrireducens (strain ATCC BAA-621 / DSM 15236 / T118) (Rhodoferax ferrireducens), this protein is RNA pyrophosphohydrolase.